Consider the following 321-residue polypeptide: RGPKNWCKVHPCWTTCGSQMRQSPININTNQTIYKRYPRLKVENVHKRVIATIRNNGHAPYFEVHEKFDDEIVLRNVPERPRRKEYNFAQLHVQLGRDEKEGSEHSIDNKFKPMEAQMVFYDKDYEDVLEAKSKKNGLVVISVMIEVYGRSKEHDDCACDGETCTVRYVRKLSKLMEKYYEKVRRYPLVSINPHFLTFIKLPRKCWYNKCGRTPSPDFIEKKCEKEEPETRPFFVFEGITPLDVIPYDTNRFYTYAGSLTSPPCYETVQWVVFKCPIKVSSKAFRMLQLVQDSHLDPLEKLGVRRPLQTNKNVIVYRNHLK.

One can recognise an Alpha-carbonic anhydrase domain in the interval 1 to 319; the sequence is RGPKNWCKVH…NKNVIVYRNH (319 aa). Residue H58 is the Proton acceptor of the active site.

Belongs to the alpha-carbonic anhydrase family. In terms of tissue distribution, component of the organic matrix of calcified shell layers like nacre and prisms.

The protein resides in the secreted. The polypeptide is Nacrein-like protein (Mytilus californianus (California mussel)).